A 274-amino-acid polypeptide reads, in one-letter code: 4-deoxy-L-threo-5-hexosulose-uronate ketol-isomerase (274 aa).

His192, His194, Glu199, and His241 together coordinate Zn(2+).

It belongs to the KduI family. Zn(2+) serves as cofactor.

The enzyme catalyses 5-dehydro-4-deoxy-D-glucuronate = 3-deoxy-D-glycero-2,5-hexodiulosonate. It participates in glycan metabolism; pectin degradation; 2-dehydro-3-deoxy-D-gluconate from pectin: step 4/5. Its function is as follows. Catalyzes the isomerization of 5-dehydro-4-deoxy-D-glucuronate to 3-deoxy-D-glycero-2,5-hexodiulosonate. The protein is 4-deoxy-L-threo-5-hexosulose-uronate ketol-isomerase of Shigella boydii serotype 18 (strain CDC 3083-94 / BS512).